Reading from the N-terminus, the 130-residue chain is MIVVGYSADPFGRAAVEHGIEEAKRRDTGLLVINATAGDAYVDARFARSGEVHDVEAHLQDSGVPFEIRQPVGVDATEELLTAMDSPDAELLVIGIRHRNPVGKLLLGSVAQRLLLECPKPVLAVKPHGF.

An N6-acetyllysine modification is found at Lys-104.

It belongs to the universal stress protein A family. Post-translationally, acetylated on Lys-104 by PatA in the presence of acetyl-CoA as an acetyl donor.

The polypeptide is Universal stress protein MSMEG_4207 (Mycolicibacterium smegmatis (strain ATCC 700084 / mc(2)155) (Mycobacterium smegmatis)).